Here is a 223-residue protein sequence, read N- to C-terminus: Endonuclease V (223 aa).

Positions 45 and 113 each coordinate Mg(2+).

The protein belongs to the endonuclease V family. Requires Mg(2+) as cofactor.

The protein resides in the cytoplasm. It carries out the reaction Endonucleolytic cleavage at apurinic or apyrimidinic sites to products with a 5'-phosphate.. In terms of biological role, DNA repair enzyme involved in the repair of deaminated bases. Selectively cleaves double-stranded DNA at the second phosphodiester bond 3' to a deoxyinosine leaving behind the intact lesion on the nicked DNA. The chain is Endonuclease V from Dehalococcoides mccartyi (strain CBDB1).